Consider the following 155-residue polypeptide: Deoxyuridine 5'-triphosphate nucleotidohydrolase (155 aa).

Residues 74 to 76 (RSG), Asn87, and 91 to 93 (LID) contribute to the substrate site.

It belongs to the dUTPase family. The cofactor is Mg(2+).

It carries out the reaction dUTP + H2O = dUMP + diphosphate + H(+). The protein operates within pyrimidine metabolism; dUMP biosynthesis; dUMP from dCTP (dUTP route): step 2/2. Functionally, this enzyme is involved in nucleotide metabolism: it produces dUMP, the immediate precursor of thymidine nucleotides and it decreases the intracellular concentration of dUTP so that uracil cannot be incorporated into DNA. This Xanthomonas oryzae pv. oryzae (strain MAFF 311018) protein is Deoxyuridine 5'-triphosphate nucleotidohydrolase.